Consider the following 356-residue polypeptide: Cyclin-dependent kinase 5 activator 1 (356 aa).

Disordered stretches follow at residues Met1–Ser53 and Ile66–Asn99. Composition is skewed to low complexity over residues Ser40 to Asn49 and Ser71 to Ser92.

The protein belongs to the cyclin-dependent kinase 5 activator family. In terms of assembly, heterodimer composed of a catalytic subunit cdk-5 and a regulatory subunit cdka-1. Interaction with cdka-1 is required for cdk-5 activation. In terms of tissue distribution, expressed in all classes of neurons in the ventral cord.

It localises to the cytoplasm. Its subcellular location is the cell projection. The protein resides in the dendrite. It is found in the axon. Activator of the kinase cdk-5. In several motor neurons, promotes the polarized trafficking of synaptic vesicles and dense-core vesicles. In the ventral nerve cord, regulates the synaptic localization of the glutamate receptor, glr-1. In DA motor neurons, regulates axonal transport of synaptic vesicle precursors by inhibiting dynein-mediated retrograde transport. Regulates the polarized distribution of dense-core vesicles in DB motor neurons. May regulate these processes in association with cdk-5. May also play a role in GABAergic synaptic vesicle localization in the ventral nerve cord. This is Cyclin-dependent kinase 5 activator 1 from Caenorhabditis elegans.